We begin with the raw amino-acid sequence, 61 residues long: Cytotoxin 2 (61 aa).

Cystine bridges form between Cys3–Cys22, Cys15–Cys39, Cys43–Cys54, and Cys55–Cys60.

It belongs to the three-finger toxin family. Short-chain subfamily. Type IB cytotoxin sub-subfamily. In terms of tissue distribution, expressed by the venom gland.

The protein resides in the secreted. In terms of biological role, this protein lyses red blood cells, has cytotoxic activity and induces hypotension, but is not neurotoxic. In addition, it induces direct paralysis of the muscle fiber. In Hemachatus haemachatus (Rinkhals), this protein is Cytotoxin 2.